The sequence spans 138 residues: Transposon Tn10 TetD protein (138 aa).

The HTH araC/xylS-type domain maps to 31–129 (KDVLLWIEHN…KVTPSYYRRN (99 aa)). 2 consecutive DNA-binding regions (H-T-H motif) follow at residues 48-69 (DDVA…KKVT) and 96-119 (ILEI…KYIF).

This is Transposon Tn10 TetD protein (tetD) from Escherichia coli.